A 144-amino-acid polypeptide reads, in one-letter code: Small ribosomal subunit protein bS6 (144 aa).

The interval 95-144 (PVTTPSPMMQDDKSKPDENSRGTAAPTVNVADDSASGAQVVAAEENDTQS) is disordered. Residues 104–114 (QDDKSKPDENS) are compositionally biased toward basic and acidic residues.

It belongs to the bacterial ribosomal protein bS6 family.

Functionally, binds together with bS18 to 16S ribosomal RNA. In Nitrosomonas eutropha (strain DSM 101675 / C91 / Nm57), this protein is Small ribosomal subunit protein bS6.